A 400-amino-acid chain; its full sequence is NADH-quinone oxidoreductase subunit D (400 aa).

Belongs to the complex I 49 kDa subunit family. NDH-1 is composed of 14 different subunits. Subunits NuoB, C, D, E, F, and G constitute the peripheral sector of the complex.

It localises to the cell inner membrane. It catalyses the reaction a quinone + NADH + 5 H(+)(in) = a quinol + NAD(+) + 4 H(+)(out). In terms of biological role, NDH-1 shuttles electrons from NADH, via FMN and iron-sulfur (Fe-S) centers, to quinones in the respiratory chain. The immediate electron acceptor for the enzyme in this species is believed to be a menaquinone. Couples the redox reaction to proton translocation (for every two electrons transferred, four hydrogen ions are translocated across the cytoplasmic membrane), and thus conserves the redox energy in a proton gradient. The chain is NADH-quinone oxidoreductase subunit D from Chlorobium phaeovibrioides (strain DSM 265 / 1930) (Prosthecochloris vibrioformis (strain DSM 265)).